A 198-amino-acid chain; its full sequence is Ribonuclease HII (198 aa).

Residues 10–198 enclose the RNase H type-2 domain; it reads HLVAGVDEVG…PVKRALGLVC (189 aa). The a divalent metal cation site is built by aspartate 16, glutamate 17, and aspartate 108.

Belongs to the RNase HII family. Mn(2+) is required as a cofactor. It depends on Mg(2+) as a cofactor.

The protein resides in the cytoplasm. It catalyses the reaction Endonucleolytic cleavage to 5'-phosphomonoester.. Endonuclease that specifically degrades the RNA of RNA-DNA hybrids. The chain is Ribonuclease HII from Enterobacter sp. (strain 638).